We begin with the raw amino-acid sequence, 264 residues long: MHQYHDLLERILSDGAQKHDRTGTGTLSVFGHQMRFNLAAGFPMVTTKRLPLKAIVHELLWFLKGDTNIKYLHDHGVTIWDEWADANGDLGPVYGYQWRSWPTSDGGQIDQISNVVDMIRRNPDSRRLIVTAWNPADVEKMALPPCHCLFQFYVANGKLSCQLYQRSADVFLGVPFNIASYALLTMMVAQVTGLKLGEFVHSFGDVHLYSNHIEQARLQLSRTPRPLPTMTLNPDVKDIFAFRYEDFALAGYDPHPHIKAEVAV.

DUMP is bound by residues Arg21 and 126-127 (RR). Residue Cys146 is the Nucleophile of the active site. DUMP-binding positions include 166 to 169 (RSAD), Asn177, and 207 to 209 (HLY). A (6R)-5,10-methylene-5,6,7,8-tetrahydrofolate-binding site is contributed by Asp169. Residue Ala263 participates in (6R)-5,10-methylene-5,6,7,8-tetrahydrofolate binding.

Belongs to the thymidylate synthase family. Bacterial-type ThyA subfamily. Homodimer.

It is found in the cytoplasm. The catalysed reaction is dUMP + (6R)-5,10-methylene-5,6,7,8-tetrahydrofolate = 7,8-dihydrofolate + dTMP. It functions in the pathway pyrimidine metabolism; dTTP biosynthesis. Functionally, catalyzes the reductive methylation of 2'-deoxyuridine-5'-monophosphate (dUMP) to 2'-deoxythymidine-5'-monophosphate (dTMP) while utilizing 5,10-methylenetetrahydrofolate (mTHF) as the methyl donor and reductant in the reaction, yielding dihydrofolate (DHF) as a by-product. This enzymatic reaction provides an intracellular de novo source of dTMP, an essential precursor for DNA biosynthesis. This chain is Thymidylate synthase, found in Bradyrhizobium sp. (strain ORS 278).